The primary structure comprises 70 residues: Conotoxin Vc6.10 (70 aa).

The signal sequence occupies residues 1 to 19 (MEKLTILLLVAAVLTSTQA). The propeptide occupies 20-40 (LIQGGADERQKAKINFLSRSD). Cystine bridges form between cysteine 43-cysteine 57, cysteine 50-cysteine 62, and cysteine 56-cysteine 69.

The protein belongs to the conotoxin O2 superfamily. In terms of tissue distribution, expressed by the venom duct.

The protein localises to the secreted. Inhibits voltage-gated ion channels. The protein is Conotoxin Vc6.10 of Conus victoriae (Queen Victoria cone).